A 178-amino-acid chain; its full sequence is Putative magnesium-dependent phosphatase YER134C (178 aa).

Catalysis depends on aspartate 11, which acts as the Nucleophile. Position 11 (aspartate 11) interacts with Mg(2+). Leucine 12, aspartate 13, serine 74, and arginine 75 together coordinate phosphate. Aspartate 13 lines the Mg(2+) pocket. Residue aspartate 13 is the Proton donor of the active site. Arginine 75 serves as a coordination point for substrate. Residue aspartate 141 participates in Mg(2+) binding.

Belongs to the HAD-like hydrolase superfamily.

The protein resides in the cytoplasm. It localises to the nucleus. It catalyses the reaction O-phospho-L-tyrosyl-[protein] + H2O = L-tyrosyl-[protein] + phosphate. Its function is as follows. Magnesium-dependent phosphatase which may act as a tyrosine phosphatase. The protein is Putative magnesium-dependent phosphatase YER134C of Saccharomyces cerevisiae (strain ATCC 204508 / S288c) (Baker's yeast).